Here is a 259-residue protein sequence, read N- to C-terminus: Sporulation-specific protein SPO7 (259 aa).

Residues 1–40 (MEPESIGDVGNHAQDDSASIVSGPRRRSTSKTSSAKNIRN) form a disordered region. The Cytoplasmic segment spans residues 1–72 (MEPESIGDVG…RQAHEQKILK (72 aa)). The helical transmembrane segment at 73–93 (WQFTLFLASMAGVGAFTFYEL) threads the bilayer. Residues 94–106 (YFTSDYVKGLHRV) lie on the Extracellular side of the membrane. A helical transmembrane segment spans residues 107 to 127 (ILQFTLSFISITVVLFHISGQ). The Cytoplasmic portion of the chain corresponds to 128–259 (YRRTIVIPRR…QAHELRPKSE (132 aa)).

In terms of assembly, component of the NEM1-SPO7 complex.

The protein resides in the endoplasmic reticulum membrane. Its subcellular location is the nucleus membrane. Its function is as follows. Regulatory component of the NEM1-SPO7 complex which acts as a phosphatase and dephosphorylates the phosphatidic acid phosphohydrolase PAH1. Essential for the formation of a spherical nucleus and meiotic division. The NEM1-SPOo7 protein phosphatase is required for efficient mitophagy under prolonged respiration, as well as for reticulophagy and pexophagy. This chain is Sporulation-specific protein SPO7 (SPO7), found in Saccharomyces cerevisiae (strain ATCC 204508 / S288c) (Baker's yeast).